We begin with the raw amino-acid sequence, 426 residues long: tRNA(Ile)-lysidine synthase (426 aa).

Residue 19–24 participates in ATP binding; the sequence is SGGLDS.

This sequence belongs to the tRNA(Ile)-lysidine synthase family.

It is found in the cytoplasm. It carries out the reaction cytidine(34) in tRNA(Ile2) + L-lysine + ATP = lysidine(34) in tRNA(Ile2) + AMP + diphosphate + H(+). Functionally, ligates lysine onto the cytidine present at position 34 of the AUA codon-specific tRNA(Ile) that contains the anticodon CAU, in an ATP-dependent manner. Cytidine is converted to lysidine, thus changing the amino acid specificity of the tRNA from methionine to isoleucine. The polypeptide is tRNA(Ile)-lysidine synthase (Neisseria meningitidis serogroup A / serotype 4A (strain DSM 15465 / Z2491)).